Here is a 182-residue protein sequence, read N- to C-terminus: Putative manganese efflux pump MntP (182 aa).

Transmembrane regions (helical) follow at residues 6–26 (LIPL…VSLG), 37–57 (ILYI…IGMV), 72–92 (FAGA…SILE), 101–121 (IGIS…SVGL), 131–151 (IITI…GLLL), and 162–182 (YGEI…LFPI).

It belongs to the MntP (TC 9.B.29) family.

The protein localises to the cell membrane. Functionally, probably functions as a manganese efflux pump. The chain is Putative manganese efflux pump MntP from Bacillus mycoides (strain KBAB4) (Bacillus weihenstephanensis).